Consider the following 1333-residue polypeptide: DNA-directed RNA polymerase subunit beta' (1333 aa).

Zn(2+) is bound by residues Cys-60, Cys-62, Cys-75, and Cys-78. The Mg(2+) site is built by Asp-535, Asp-537, and Asp-539. Positions 901, 983, 990, and 993 each coordinate Zn(2+).

This sequence belongs to the RNA polymerase beta' chain family. The RNAP catalytic core consists of 2 alpha, 1 beta, 1 beta' and 1 omega subunit. When a sigma factor is associated with the core the holoenzyme is formed, which can initiate transcription. It depends on Mg(2+) as a cofactor. Zn(2+) is required as a cofactor.

The catalysed reaction is RNA(n) + a ribonucleoside 5'-triphosphate = RNA(n+1) + diphosphate. Functionally, DNA-dependent RNA polymerase catalyzes the transcription of DNA into RNA using the four ribonucleoside triphosphates as substrates. This is DNA-directed RNA polymerase subunit beta' from Corynebacterium glutamicum (strain R).